Reading from the N-terminus, the 172-residue chain is C-phycocyanin beta chain (172 aa).

Residue asparagine 72 is modified to N4-methylasparagine. Residues cysteine 82 and cysteine 153 each coordinate (2R,3E)-phycocyanobilin.

Belongs to the phycobiliprotein family. Heterodimer of an alpha and a beta subunit, which further assembles into trimers and the trimers into hexamers. The basic functional unit of phycobiliproteins is a ring-shaped hexamer formed from two back-to-back trimers contacting via the alpha chain subunits. The trimers are composed of alpha/beta subunit heterodimers arranged around a three-fold axis of symmetry. The phycoerythrins also contain a gamma subunit which is located in the center of the hexamer. Post-translationally, contains two covalently linked bilin chromophores.

It is found in the plastid. Its subcellular location is the chloroplast thylakoid membrane. Light-harvesting photosynthetic bile pigment-protein from the phycobiliprotein complex (phycobilisome, PBS). Phycocyanin is the major phycobiliprotein in the PBS rod. The polypeptide is C-phycocyanin beta chain (cpcB) (Porphyra purpurea (Red seaweed)).